A 91-amino-acid polypeptide reads, in one-letter code: Large ribosomal subunit protein uL23c (91 aa).

The protein belongs to the universal ribosomal protein uL23 family. Part of the 50S ribosomal subunit.

It localises to the plastid. It is found in the chloroplast. Functionally, binds to 23S rRNA. This Marchantia polymorpha (Common liverwort) protein is Large ribosomal subunit protein uL23c (rpl23).